Here is a 174-residue protein sequence, read N- to C-terminus: Inactive signal peptidase IA (174 aa).

Residues 1 to 7 (MKKVVKY) lie on the Cytoplasmic side of the membrane. A helical membrane pass occupies residues 8–28 (LISLILAIIIVLFVQTFVIVG). Topologically, residues 29–174 (HVIPNNDMSP…FSKWTIQFKS (146 aa)) are extracellular.

It belongs to the peptidase S26 family.

Its subcellular location is the cell membrane. Catalytically inactive. The chain is Inactive signal peptidase IA (spsA) from Staphylococcus aureus (strain MRSA252).